Reading from the N-terminus, the 860-residue chain is Beta-glucosidase 1 (860 aa).

The N-terminal stretch at 1-19 is a signal peptide; it reads MKLSWLEAAALTAASVVSA. N-linked (GlcNAc...) asparagine glycans are attached at residues Asn61, Asn211, and Asn252. The active site involves Asp280. N-linked (GlcNAc...) asparagine glycans are attached at residues Asn315, Asn322, Asn354, Asn387, Asn442, Asn523, Asn542, Asn564, Asn658, Asn668, Asn690, and Asn712.

The protein belongs to the glycosyl hydrolase 3 family.

The catalysed reaction is Hydrolysis of terminal, non-reducing beta-D-glucosyl residues with release of beta-D-glucose.. It functions in the pathway glycan metabolism; cellulose degradation. The chain is Beta-glucosidase 1 from Aspergillus aculeatus.